Consider the following 100-residue polypeptide: NADH-quinone oxidoreductase subunit K (100 aa).

Helical transmembrane passes span L4–V24, L28–V48, and V60–L80.

This sequence belongs to the complex I subunit 4L family. In terms of assembly, NDH-1 is composed of 13 different subunits. Subunits NuoA, H, J, K, L, M, N constitute the membrane sector of the complex.

It is found in the cell inner membrane. It carries out the reaction a quinone + NADH + 5 H(+)(in) = a quinol + NAD(+) + 4 H(+)(out). In terms of biological role, NDH-1 shuttles electrons from NADH, via FMN and iron-sulfur (Fe-S) centers, to quinones in the respiratory chain. The immediate electron acceptor for the enzyme in this species is believed to be ubiquinone. Couples the redox reaction to proton translocation (for every two electrons transferred, four hydrogen ions are translocated across the cytoplasmic membrane), and thus conserves the redox energy in a proton gradient. The chain is NADH-quinone oxidoreductase subunit K from Serratia proteamaculans (strain 568).